Here is a 555-residue protein sequence, read N- to C-terminus: DNA ligase (555 aa).

Glu247 is a binding site for ATP. Lys249 (N6-AMP-lysine intermediate) is an active-site residue. The ATP site is built by Arg254, Arg269, Glu298, Phe337, Arg411, and Lys417.

The protein belongs to the ATP-dependent DNA ligase family. Requires Mg(2+) as cofactor.

The enzyme catalyses ATP + (deoxyribonucleotide)n-3'-hydroxyl + 5'-phospho-(deoxyribonucleotide)m = (deoxyribonucleotide)n+m + AMP + diphosphate.. Functionally, DNA ligase that seals nicks in double-stranded DNA during DNA replication, DNA recombination and DNA repair. The chain is DNA ligase from Archaeoglobus fulgidus (strain ATCC 49558 / DSM 4304 / JCM 9628 / NBRC 100126 / VC-16).